A 270-amino-acid chain; its full sequence is Interleukin-1 beta (270 aa).

A propeptide spanning residues 1–118 is cleaved from the precursor; the sequence is MARVPEPTSE…KCDDNAFVHD (118 aa).

This sequence belongs to the IL-1 family. Monomer. In its precursor form, weakly interacts with full-length MEFV; the mature cytokine does not interact at all. Interacts with integrins ITGAV:ITGBV and ITGA5:ITGB1; integrin-binding is required for IL1B signaling. Interacts with cargo receptor TMED10; the interaction is direct and is required for the secretion of IL1B mature form. Interacts with HSP90AB1; the interaction facilitates cargo translocation into the ERGIC. Interacts with HSP90B1; the interaction facilitates cargo translocation into the ERGIC.

The protein localises to the cytoplasm. The protein resides in the cytosol. It localises to the secreted. Its subcellular location is the lysosome. It is found in the extracellular exosome. Potent pro-inflammatory cytokine. Initially discovered as the major endogenous pyrogen, induces prostaglandin synthesis, neutrophil influx and activation, T-cell activation and cytokine production, B-cell activation and antibody production, and fibroblast proliferation and collagen production. Promotes Th17 differentiation of T-cells. Synergizes with IL12/interleukin-12 to induce IFNG synthesis from T-helper 1 (Th1) cells. Plays a role in angiogenesis by inducing VEGF production synergistically with TNF and IL6. Involved in transduction of inflammation downstream of pyroptosis: its mature form is specifically released in the extracellular milieu by passing through the gasdermin-D (GSDMD) pore. This Mustela putorius furo (European domestic ferret) protein is Interleukin-1 beta (IL1B).